The chain runs to 219 residues: Ribosome hibernation promotion factor (219 aa).

This sequence belongs to the HPF/YfiA ribosome-associated protein family. Long HPF subfamily. As to quaternary structure, interacts with 100S ribosomes.

The protein resides in the cytoplasm. In terms of biological role, required for dimerization of active 70S ribosomes into 100S ribosomes in stationary phase; 100S ribosomes are translationally inactive and sometimes present during exponential growth. The polypeptide is Ribosome hibernation promotion factor (Mycobacterium tuberculosis (strain ATCC 25618 / H37Rv)).